A 105-amino-acid chain; its full sequence is Large ribosomal subunit protein uL24 (105 aa).

It belongs to the universal ribosomal protein uL24 family. As to quaternary structure, part of the 50S ribosomal subunit.

Its function is as follows. One of two assembly initiator proteins, it binds directly to the 5'-end of the 23S rRNA, where it nucleates assembly of the 50S subunit. One of the proteins that surrounds the polypeptide exit tunnel on the outside of the subunit. The sequence is that of Large ribosomal subunit protein uL24 from Chromohalobacter salexigens (strain ATCC BAA-138 / DSM 3043 / CIP 106854 / NCIMB 13768 / 1H11).